A 266-amino-acid chain; its full sequence is Large ribosomal subunit protein uL2m (266 aa).

This sequence belongs to the universal ribosomal protein uL2 family.

Its subcellular location is the mitochondrion. This is Large ribosomal subunit protein uL2m (mrpl2) from Dictyostelium citrinum (Slime mold).